The chain runs to 367 residues: DNA replication and repair protein RecF (367 aa).

30 to 37 provides a ligand contact to ATP; sequence GANGSGKT.

The protein belongs to the RecF family.

The protein localises to the cytoplasm. Functionally, the RecF protein is involved in DNA metabolism; it is required for DNA replication and normal SOS inducibility. RecF binds preferentially to single-stranded, linear DNA. It also seems to bind ATP. The chain is DNA replication and repair protein RecF from Pseudomonas putida (strain ATCC 47054 / DSM 6125 / CFBP 8728 / NCIMB 11950 / KT2440).